Here is a 461-residue protein sequence, read N- to C-terminus: High-affinity Na(+)/H(+) antiporter NhaS3 (461 aa).

11 helical membrane-spanning segments follow: residues Thr-22–Ala-42, Val-58–Phe-78, Ser-113–Leu-133, Ala-148–Phe-170, Ile-175–Ala-197, Ile-209–Gly-229, Ile-239–Ile-259, Leu-280–Leu-300, Gly-360–Phe-380, Leu-391–Gly-411, and Ala-424–Phe-444.

This sequence belongs to the monovalent cation:proton antiporter 2 (CPA2) transporter (TC 2.A.37) family.

It is found in the cellular thylakoid membrane. Functionally, na(+)/H(+) antiporter that transports sodium from the cytoplasm into the thylakoid lumen in exchange for protons. Contributes to sodium homeostasis and tolerance. Also has Li(+)/H(+) antiport activity under K(+)-free conditions, but not under K(+)-rich conditions. This is High-affinity Na(+)/H(+) antiporter NhaS3 (nhaS3) from Synechocystis sp. (strain ATCC 27184 / PCC 6803 / Kazusa).